Here is a 138-residue protein sequence, read N- to C-terminus: High mobility group B protein 4 (138 aa).

Disordered stretches follow at residues 1 to 41 and 105 to 138; these read MKGG…PPSA and LKLA…EDDD. Positions 18-29 are enriched in basic residues; the sequence is KTRGRKAGKKTK. The HMG box DNA-binding region spans 35–104; sequence PKRPPSAFFV…EYIKNVQQYN (70 aa). Serine 123 and serine 130 each carry phosphoserine. Residues 126-138 are compositionally biased toward acidic residues; that stretch reads DEAVSEEEAEDDD.

This sequence belongs to the HMGB family. In terms of tissue distribution, mostly expressed roots and flowers, and, to a lower extent, in stems and leaves.

The protein resides in the nucleus. It is found in the cytoplasm. Its subcellular location is the cytosol. Functionally, binds preferentially double-stranded DNA. This chain is High mobility group B protein 4 (HMGB4), found in Arabidopsis thaliana (Mouse-ear cress).